Here is a 277-residue protein sequence, read N- to C-terminus: NADPH-dependent 7-cyano-7-deazaguanine reductase (277 aa).

83-85 (IES) provides a ligand contact to substrate. 85-86 (SK) contacts NADPH. Cysteine 184 (thioimide intermediate) is an active-site residue. Aspartate 191 functions as the Proton donor in the catalytic mechanism. 223–224 (HE) provides a ligand contact to substrate. 252–253 (RG) is a binding site for NADPH.

This sequence belongs to the GTP cyclohydrolase I family. QueF type 2 subfamily. As to quaternary structure, homodimer.

It is found in the cytoplasm. It carries out the reaction 7-aminomethyl-7-carbaguanine + 2 NADP(+) = 7-cyano-7-deazaguanine + 2 NADPH + 3 H(+). Its pathway is tRNA modification; tRNA-queuosine biosynthesis. Its function is as follows. Catalyzes the NADPH-dependent reduction of 7-cyano-7-deazaguanine (preQ0) to 7-aminomethyl-7-deazaguanine (preQ1). In Cupriavidus pinatubonensis (strain JMP 134 / LMG 1197) (Cupriavidus necator (strain JMP 134)), this protein is NADPH-dependent 7-cyano-7-deazaguanine reductase.